The sequence spans 279 residues: Hydroxyethylthiazole kinase (279 aa).

Met58 contacts substrate. Positions 134 and 180 each coordinate ATP. Gly207 serves as a coordination point for substrate.

The protein belongs to the Thz kinase family. Mg(2+) is required as a cofactor.

The catalysed reaction is 5-(2-hydroxyethyl)-4-methylthiazole + ATP = 4-methyl-5-(2-phosphooxyethyl)-thiazole + ADP + H(+). It functions in the pathway cofactor biosynthesis; thiamine diphosphate biosynthesis; 4-methyl-5-(2-phosphoethyl)-thiazole from 5-(2-hydroxyethyl)-4-methylthiazole: step 1/1. Its function is as follows. Catalyzes the phosphorylation of the hydroxyl group of 4-methyl-5-beta-hydroxyethylthiazole (THZ). In Methanoculleus marisnigri (strain ATCC 35101 / DSM 1498 / JR1), this protein is Hydroxyethylthiazole kinase.